Consider the following 509-residue polypeptide: MTRLSILQHLLTFLILSKINATSTTESYFDSSEEAPNVLLNHLNNESEGEELTQINDTQPAFVPGSSKRLTEYLLSRHNLNAPPDGLLYVEYELELVHILGIDELKQTMTVLIYVDEHWVDPSLTWDPALFGGITKTWIPLDKIWVPDIIVFNMVKSNRLAHEDLLSAVRAPARIHYNGTIVASHPAVHTVSCEINIRHFPLDDQRCAIEIASWAYGQEKIRLHAHTDHSLEHYKRNEEWHLLNLNVSEEKYEHEGVEVSEVKFEISLKRRPLFYMVTLTFPSYIMCAISVVGLFARFSTTGEREERFTLGVTAILTMAVLSLVVSEKVPHSSTHVPLLVAYFLFNMVIVSIAAMTTGIVMKVHRLGRYGDEPSDFWMRCFLLKPVFRTSNRRKYRMNPEEPTQVILVSEAKNGEVLTKKSTELNGTVVKEIMLSSRLEALEEYIRKMVNRCETIKWELDEIDAAENIELVRRRSTNGYVRISERLDILFMFLFLSTVTIPVAVLFYLT.

The signal sequence occupies residues 1 to 21; sequence MTRLSILQHLLTFLILSKINA. Residues 22–275 lie on the Extracellular side of the membrane; sequence TSTTESYFDS…ISLKRRPLFY (254 aa). A disulfide bond links Cys-193 and Cys-207. Transmembrane regions (helical) follow at residues 276-296, 310-330, and 336-356; these read MVTLTFPSYIMCAISVVGLFA, LGVTAILTMAVLSLVVSEKVP, and VPLLVAYFLFNMVIVSIAAMT. At 357–487 the chain is on the cytoplasmic side; that stretch reads TGIVMKVHRL…GYVRISERLD (131 aa). Residues 488–508 form a helical membrane-spanning segment; sequence ILFMFLFLSTVTIPVAVLFYL.

The protein belongs to the ligand-gated ion channel (TC 1.A.9) family. Acetylcholine receptor (TC 1.A.9.1) subfamily. As to quaternary structure, the functional channel is a heterooligomer of pbo-5 and pbo-6. May self-associate to form homooligomers with negligible ion channel activity. Expressed in the posterior body muscles. Also detected in the RIFL, RIFR and RIS head neurons.

The protein resides in the membrane. Forms a proton-gated ion channel with pbo-6 that is activated by acidification of the posterior coelomic space, leading to posterior body wall muscle contraction (pBoc) during the defecation cycle. Probably by regulating the defecation motor program, required for fatty acid uptake by intestinal cells. Does not bind neurotransmitters such as acetylcholine, gamma-aminobutyric acid, glycine, serotonin, glutamate or choline. In Caenorhabditis elegans, this protein is Proton-gated ion channel subunit pbo-5.